An 855-amino-acid chain; its full sequence is DNA mismatch repair protein MutS (855 aa).

Gly-613–Ser-620 lines the ATP pocket. Residues Glu-795–Gln-816 are disordered. The segment covering Thr-796–Gln-816 has biased composition (polar residues).

Belongs to the DNA mismatch repair MutS family.

Its function is as follows. This protein is involved in the repair of mismatches in DNA. It is possible that it carries out the mismatch recognition step. This protein has a weak ATPase activity. The protein is DNA mismatch repair protein MutS of Pseudomonas paraeruginosa (strain DSM 24068 / PA7) (Pseudomonas aeruginosa (strain PA7)).